The chain runs to 397 residues: Argininosuccinate synthase (397 aa).

7–15 (AFSGGLDTT) contacts ATP. Y84 is an L-citrulline binding site. G114 is a binding site for ATP. L-aspartate contacts are provided by T116, N120, and D121. N120 lines the L-citrulline pocket. R124, S170, S179, E254, and Y266 together coordinate L-citrulline.

It belongs to the argininosuccinate synthase family. Type 1 subfamily. As to quaternary structure, homotetramer.

It localises to the cytoplasm. It carries out the reaction L-citrulline + L-aspartate + ATP = 2-(N(omega)-L-arginino)succinate + AMP + diphosphate + H(+). Its pathway is amino-acid biosynthesis; L-arginine biosynthesis; L-arginine from L-ornithine and carbamoyl phosphate: step 2/3. In Haloquadratum walsbyi (strain DSM 16790 / HBSQ001), this protein is Argininosuccinate synthase.